The chain runs to 134 residues: MWHLRCSNWRGSGVFGMCFSLSGCVMGQWCVSRAIVRGHTQGGAVREVVRELLLGPQHHGYARLVDPAVRPLSCFSRGDTLYIDLPVGVLSPKYRTCSLHRAYELXERSVVLNCAPVKRVCFYVGGRAGFESDG.

The N-terminal stretch at 1–23 (MWHLRCSNWRGSGVFGMCFSLSG) is a signal peptide. A lipid anchor (N-palmitoyl cysteine) is attached at cysteine 24. Cysteine 24 carries the S-diacylglycerol cysteine lipid modification.

It is found in the cell membrane. This is an uncharacterized protein from Treponema pallidum (strain Nichols).